The chain runs to 185 residues: Transcription factor bHLH109 (185 aa).

In terms of domain architecture, bHLH spans 67-117; it reads RSMEYRMMMEKKRRKEIKDKVDILQGLMPNHCTKPDLASKLENIIEYIKSL.

The protein belongs to the bHLH protein family. In terms of assembly, homodimer.

Its subcellular location is the nucleus. Functionally, transcription factor involved in somatic embryogenesis. Acts as a positive regulator of somatic embryo formation. Acts as a positive regulator of ECP63 by targeting its promoter and inducing its expression. This chain is Transcription factor bHLH109 (BHLH109), found in Arabidopsis thaliana (Mouse-ear cress).